The primary structure comprises 156 residues: 6,7-dimethyl-8-ribityllumazine synthase (156 aa).

Residues F22, 57-59 (AYE), and 81-83 (TVI) each bind 5-amino-6-(D-ribitylamino)uracil. 86–87 (GT) contacts (2S)-2-hydroxy-3-oxobutyl phosphate. H89 (proton donor) is an active-site residue. Residue F114 coordinates 5-amino-6-(D-ribitylamino)uracil. R128 is a binding site for (2S)-2-hydroxy-3-oxobutyl phosphate.

It belongs to the DMRL synthase family. As to quaternary structure, forms an icosahedral capsid composed of 60 subunits, arranged as a dodecamer of pentamers.

The catalysed reaction is (2S)-2-hydroxy-3-oxobutyl phosphate + 5-amino-6-(D-ribitylamino)uracil = 6,7-dimethyl-8-(1-D-ribityl)lumazine + phosphate + 2 H2O + H(+). Its pathway is cofactor biosynthesis; riboflavin biosynthesis; riboflavin from 2-hydroxy-3-oxobutyl phosphate and 5-amino-6-(D-ribitylamino)uracil: step 1/2. Its function is as follows. Catalyzes the formation of 6,7-dimethyl-8-ribityllumazine by condensation of 5-amino-6-(D-ribitylamino)uracil with 3,4-dihydroxy-2-butanone 4-phosphate. This is the penultimate step in the biosynthesis of riboflavin. The polypeptide is 6,7-dimethyl-8-ribityllumazine synthase (Enterobacter sp. (strain 638)).